The primary structure comprises 59 residues: Small ribosomal subunit protein bS21 (59 aa).

Residues 40 to 59 (KPSIKKRAKSKAALKYKKQR) form a disordered region.

Belongs to the bacterial ribosomal protein bS21 family.

The chain is Small ribosomal subunit protein bS21 from Protochlamydia amoebophila (strain UWE25).